We begin with the raw amino-acid sequence, 152 residues long: Transcriptional regulator MraZ (152 aa).

2 SpoVT-AbrB domains span residues 5–52 (ATQI…TLSE) and 81–124 (ASEC…DEQA).

It belongs to the MraZ family. As to quaternary structure, forms oligomers.

It localises to the cytoplasm. It is found in the nucleoid. Negatively regulates its own expression and that of the subsequent genes in the proximal part of the division and cell wall (dcw) gene cluster. Acts by binding directly to DNA. May also regulate the expression of genes outside the dcw cluster. This chain is Transcriptional regulator MraZ, found in Photorhabdus laumondii subsp. laumondii (strain DSM 15139 / CIP 105565 / TT01) (Photorhabdus luminescens subsp. laumondii).